A 1290-amino-acid chain; its full sequence is Alpha-amylase (1290 aa).

Residues 1–31 form the signal peptide; the sequence is MTRKTRYLHQITTLILGGLLIVPAAAPPVSA. The Nucleophile role is filled by Glu-231. Asp-373 (proton donor) is an active-site residue. In terms of domain architecture, Fibronectin type-III spans 817 to 902; sequence VPANLQATVM…AAATATTPAG (86 aa). The tract at residues 902-978 is CBM25; sequence GNHVTVYYKQ…SNGGSNYLFG (77 aa). Composition is skewed to low complexity over residues 994-1008 and 1016-1031; these read APVAPSATPTVAPTA and VTPTVTPITTPTVAPT. The tract at residues 994-1037 is disordered; the sequence is APVAPSATPTVAPTATPTPKPSVTPTVTPITTPTVAPTLSPTPT. The CBM25 stretch occupies residues 1092–1171; sequence GNSATIYYKN…NGGSNYHFGT (80 aa). Residues 1183–1289 enclose the CBM20 domain; that stretch reads TGEPQADSVT…VTLTVQRWKD (107 aa).

Belongs to the glycosyl hydrolase 119 (GH119) family.

The protein localises to the secreted. It catalyses the reaction Endohydrolysis of (1-&gt;4)-alpha-D-glucosidic linkages in polysaccharides containing three or more (1-&gt;4)-alpha-linked D-glucose units.. In terms of biological role, acts on maltooligosaccharides that have a degree of polymerization (DP) of 4 or more, amylose, and soluble or raw starch to produce glucose and maltooligosaccharides up to DP5 by a hydrolysis reaction. Also acts on maltooligosyl trehaloses that have DP5 or more to produce trehalose as the major hydrolysis product. The polypeptide is Alpha-amylase (Niallia circulans (Bacillus circulans)).